Consider the following 1214-residue polypeptide: MAIIKRGARNKTAQEPAKRSAKIKKATYDSGKKKEVGVSDLTLLSTISDEAINENLKKRFTNGTIYTYIGHVLISVNPFRDLGIYTDAVLESYKGKNRLEVPPHVFAIAESMYYNLKAYNENQCVIISGESGAGKTEAAKRIMQYIASASESNSESIGKIKDMVLATNPLLESFGCAKTLRNNNSSRHGKYLEIRFNNQFEPCAGNITNYLLEKQRVVSQIKEERNFHIFYQFTKGASENYRQTFGVQKPEQYIYTSAAGCTSVDTIDDVKDYEDTLKAMQVIGLSQDEQDQIFRMLSSILWVGNISFVENEEGNAQVRDTSVTDFVAYLLQIDSQVLMKALVERTMETSHGMRRGSVYHVPLNIVQATAVRDALAKAIYNNMFDWIVERVNISLQAYPGADKSIGILDIYGFEIFEHNSFEQICINYVNEKLQQIFIQLTLKSEQETYEREQIQWTPIKFFDNKIVCDLIESRRPPGIFAAMNDSVATAHADSDAADQAFSQRLNLFSTNPHFALRSNKFVIKHYAGDVTYDVNGITDKNKDQLQRDLVELIATSSNAFLRTIFPDNVDKDSKRRPPTAGDKIIKSANELVETLSKAQPSYIRTIKPNQTKSPNDYDDQQVLHQVKYLGLKENVRIRRAGFAYRQVFDKFVERFYLLSPSCSYAGDYTWQGETLEAVKLILKEASIPEKEYQVGVSQVFIKTPETLFALEHMRDKYWYNMAARIQRAWRRFLQRRIDSATRIQRAIREKKGGNKYEKLRDEGSKILAARKERRTMSLLGFRAFMGDYLLCNERKSRGAYIKKQAGISDKVVFSIKGEQLQSKFGRSSVRVKKVLILTHSHLYIIGQSMVQNSVQYTTEYKIDVNKIAGVSMTNLQDDWVAINLSNSTQPDPLLHTFFKTELVTQLKKLNGRIQVKIGTVIEYQKKPGKMHKVKSQVSEATPKYNDNYKSGTILVRRGHPANSPQKKKPKKGKGHSKHHSTSTSAPRSSVQSSQPSAPVSRKTKKPAPPPPGSKKLSSSVAQTASRPQPVANSARGAAQPQATPQPAQVTQPQQKKVAPPPPPPPPMQSSEPKYEAAYDFPGSGSPSELPLKKGEVVYITREEPSGWSLAKTLDGSREGWVPTNYVVKHQGGSVPPPPPAPAAVQATQAANVTSTPVSSSQSETATTATPASVAAAQPNFSDGLASALAARANKMRVESDGEDNGNDDDDDDDW.

The disordered stretch occupies residues 1–21 (MAIIKRGARNKTAQEPAKRSA). The region spanning 36–715 (VGVSDLTLLS…TLFALEHMRD (680 aa)) is the Myosin motor domain. Residue 129-136 (GESGAGKT) participates in ATP binding. At S357 the chain carries Phosphoserine. The actin-binding stretch occupies residues 404–486 (SIGILDIYGF…PGIFAAMNDS (83 aa)). IQ domains are found at residues 719–739 (YNMA…RIDS) and 740–765 (ATRI…EGSK). Residues 771-961 (KERRTMSLLG…TILVRRGHPA (191 aa)) form the TH1 domain. 3 disordered regions span residues 926 to 1090 (KPGK…SELP), 1129 to 1177 (HQGG…AAAQ), and 1193 to 1214 (NKMR…DDDW). Basic residues predominate over residues 965–980 (QKKKPKKGKGHSKHHS). Low complexity-rich tracts occupy residues 981 to 1000 (TSTS…APVS) and 1037 to 1057 (AAQP…QKKV). A compositionally biased stretch (pro residues) spans 1058 to 1067 (APPPPPPPPM). The 63-residue stretch at 1069-1131 (SSEPKYEAAY…PTNYVVKHQG (63 aa)) folds into the SH3 domain. Residues 1157–1177 (VSSSQSETATTATPASVAAAQ) show a composition bias toward low complexity. The segment covering 1200-1214 (DGEDNGNDDDDDDDW) has biased composition (acidic residues).

The protein belongs to the TRAFAC class myosin-kinesin ATPase superfamily. Myosin family. Phosphorylation of the TEDS site (Ser-357) is required for the polarization of the actin cytoskeleton. Phosphorylation probably activates the myosin-I ATPase activity.

Its subcellular location is the cytoplasm. It localises to the cytoskeleton. It is found in the actin patch. In terms of biological role, type-I myosin implicated in the organization of the actin cytoskeleton. Required for proper actin cytoskeleton polarization. At the cell cortex, assembles in patch-like structures together with proteins from the actin-polymerizing machinery and promotes actin assembly. Functions as actin nucleation-promoting factor (NPF) for the Arp2/3 complex. The polypeptide is Myosin-1 (MYO1) (Vanderwaltozyma polyspora (strain ATCC 22028 / DSM 70294 / BCRC 21397 / CBS 2163 / NBRC 10782 / NRRL Y-8283 / UCD 57-17) (Kluyveromyces polysporus)).